The sequence spans 200 residues: Lipopolysaccharide core heptose(II)-phosphate phosphatase (200 aa).

Positions 1–25 are cleaved as a signal peptide; the sequence is MLAFCRSSLKSKKYIIILLALAAIA.

This sequence belongs to the phosphoglycerate mutase family. Ais subfamily.

It is found in the periplasm. The protein operates within bacterial outer membrane biogenesis; lipopolysaccharide metabolism. In terms of biological role, catalyzes the dephosphorylation of heptose(II) of the outer membrane lipopolysaccharide core. The polypeptide is Lipopolysaccharide core heptose(II)-phosphate phosphatase (Escherichia coli (strain ATCC 8739 / DSM 1576 / NBRC 3972 / NCIMB 8545 / WDCM 00012 / Crooks)).